The following is a 291-amino-acid chain: MTILAIDIGGTKLAAALIGADGQIRDRRELPTPASQTPEALRDALSALVSPLQAHAQRVAIASTGIIRDGSLLALNPHNLGGLLHFPLVKTLEQLTNLPTIAINDAQAAAWAEYQALEGDITDMVFITVSTGVGGGVVSGGKLLTGPGGLAGHIGHTLADPHGPVCGCGRTGCVEAIASGRGIAAAAQGELAGADARTIFTRAGQGDEQAQQLIHRSARTLARLIADIKATTDCQCVVVGGSVGLAEGYLALVEMYLAQEPAAFHVDLLAAHYRHDAGLLGAALLAQGEKL.

Residues 5 to 12 and 132 to 139 each bind ATP; these read AIDIGGTK and GVGGGVVS. Residues H156, C166, C168, and C173 each coordinate Zn(2+).

This sequence belongs to the ROK (NagC/XylR) family. NanK subfamily. In terms of assembly, homodimer.

It catalyses the reaction an N-acyl-D-mannosamine + ATP = an N-acyl-D-mannosamine 6-phosphate + ADP + H(+). It participates in amino-sugar metabolism; N-acetylneuraminate degradation; D-fructose 6-phosphate from N-acetylneuraminate: step 2/5. Functionally, catalyzes the phosphorylation of N-acetylmannosamine (ManNAc) to ManNAc-6-P. This chain is N-acetylmannosamine kinase, found in Shigella flexneri serotype 5b (strain 8401).